Reading from the N-terminus, the 440-residue chain is Ribulose bisphosphate carboxylase large chain (440 aa).

At Lys-4 the chain carries N6,N6,N6-trimethyllysine. Substrate-binding residues include Asn-113 and Thr-163. Catalysis depends on Lys-165, which acts as the Proton acceptor. Lys-167 lines the substrate pocket. The Mg(2+) site is built by Lys-191, Asp-193, and Glu-194. At Lys-191 the chain carries N6-carboxylysine. His-284 acts as the Proton acceptor in catalysis. Residues Arg-285, His-317, and Ser-369 each contribute to the substrate site.

This sequence belongs to the RuBisCO large chain family. Type I subfamily. As to quaternary structure, heterohexadecamer of 8 large chains and 8 small chains; disulfide-linked. The disulfide link is formed within the large subunit homodimers. The cofactor is Mg(2+). The disulfide bond which can form in the large chain dimeric partners within the hexadecamer appears to be associated with oxidative stress and protein turnover.

The protein resides in the plastid. It localises to the chloroplast. It catalyses the reaction 2 (2R)-3-phosphoglycerate + 2 H(+) = D-ribulose 1,5-bisphosphate + CO2 + H2O. The catalysed reaction is D-ribulose 1,5-bisphosphate + O2 = 2-phosphoglycolate + (2R)-3-phosphoglycerate + 2 H(+). RuBisCO catalyzes two reactions: the carboxylation of D-ribulose 1,5-bisphosphate, the primary event in carbon dioxide fixation, as well as the oxidative fragmentation of the pentose substrate in the photorespiration process. Both reactions occur simultaneously and in competition at the same active site. The protein is Ribulose bisphosphate carboxylase large chain of Matteuccia struthiopteris (European ostrich fern).